The following is a 199-amino-acid chain: NAD(P)H dehydrogenase (quinone) (199 aa).

One can recognise a Flavodoxin-like domain in the interval 4-190 (VLVLYYSTYG…DGARFLGQHV (187 aa)). Residues 10–15 (STYGHI) and 78–80 (TRF) each bind FMN. An NAD(+)-binding site is contributed by tyrosine 12. Tryptophan 98 contacts substrate. Residues 113 to 119 (STATQHG) and histidine 134 each bind FMN.

The protein belongs to the WrbA family. FMN is required as a cofactor.

The enzyme catalyses a quinone + NADH + H(+) = a quinol + NAD(+). It carries out the reaction a quinone + NADPH + H(+) = a quinol + NADP(+). The protein is NAD(P)H dehydrogenase (quinone) of Gluconacetobacter diazotrophicus (strain ATCC 49037 / DSM 5601 / CCUG 37298 / CIP 103539 / LMG 7603 / PAl5).